Reading from the N-terminus, the 271-residue chain is MEFWQHIYSNFNVIAFSIFGLKVHWYGIMYDVALLLALLLAKFFVRKFQLDINEKHLYSYFIWVEIGVILGARLGYILIYDANTMYYITHPWQIFNPYINGEFVGIRGMSYHGAIIGFLIATLLFCKKYKTNPWIFLDLVALSVPLAYVFGRIGNFLNQELFGRITNVPWGIYIDGVLRHPSQFYEAFLEGIVVFIIVYLARFKQSFQGELILVYAGAYSLARFICEFYREPDFGIGFVLWGMSMGQILSFIMFITALLVYICIKFKKVNI.

7 consecutive transmembrane segments (helical) span residues 25-45, 60-80, 103-123, 134-154, 181-201, 209-229, and 235-255; these read WYGIMYDVALLLALLLAKFFV, YFIWVEIGVILGARLGYILIY, FVGIRGMSYHGAIIGFLIATL, WIFLDLVALSVPLAYVFGRIG, PSQFYEAFLEGIVVFIIVYLA, GELILVYAGAYSLARFICEFY, and GIGFVLWGMSMGQILSFIMFI. R152 is an a 1,2-diacyl-sn-glycero-3-phospho-(1'-sn-glycerol) binding site.

It belongs to the Lgt family.

The protein resides in the cell inner membrane. The enzyme catalyses L-cysteinyl-[prolipoprotein] + a 1,2-diacyl-sn-glycero-3-phospho-(1'-sn-glycerol) = an S-1,2-diacyl-sn-glyceryl-L-cysteinyl-[prolipoprotein] + sn-glycerol 1-phosphate + H(+). It functions in the pathway protein modification; lipoprotein biosynthesis (diacylglyceryl transfer). In terms of biological role, catalyzes the transfer of the diacylglyceryl group from phosphatidylglycerol to the sulfhydryl group of the N-terminal cysteine of a prolipoprotein, the first step in the formation of mature lipoproteins. In Campylobacter jejuni subsp. doylei (strain ATCC BAA-1458 / RM4099 / 269.97), this protein is Phosphatidylglycerol--prolipoprotein diacylglyceryl transferase.